Here is a 191-residue protein sequence, read N- to C-terminus: MEYLIVALSSYLLGSIPFGFILTKIFLKKDIRDIGSGNIGATNALRTGNKTLGYATLLLDITKAVLPVLYVKFNYPDYIFIASLSAFLGHVFPIWLKFKGGKGVATYVGILFSINIFLGLVFIISWAVTFLISKYSSLSSLVGSLMVPMYLIVFENYNSIFFIIMFVLIFYTHRENVKRLKNKEETKTKIY.

5 helical membrane passes run 3-23 (YLIV…FILT), 51-71 (TLGY…VLYV), 78-98 (YIFI…WLKF), 108-128 (VGIL…SWAV), and 150-170 (YLIV…VLIF).

Belongs to the PlsY family. In terms of assembly, probably interacts with PlsX.

Its subcellular location is the cell inner membrane. It catalyses the reaction an acyl phosphate + sn-glycerol 3-phosphate = a 1-acyl-sn-glycero-3-phosphate + phosphate. It functions in the pathway lipid metabolism; phospholipid metabolism. Catalyzes the transfer of an acyl group from acyl-phosphate (acyl-PO(4)) to glycerol-3-phosphate (G3P) to form lysophosphatidic acid (LPA). This enzyme utilizes acyl-phosphate as fatty acyl donor, but not acyl-CoA or acyl-ACP. In Pelagibacter ubique (strain HTCC1062), this protein is Glycerol-3-phosphate acyltransferase.